The sequence spans 346 residues: Probable alcohol dehydrogenase AdhA (346 aa).

Zn(2+)-binding residues include Cys-51, His-73, Cys-109, Cys-112, Cys-115, Cys-123, and Cys-165.

Belongs to the zinc-containing alcohol dehydrogenase family. The cofactor is Zn(2+).

The catalysed reaction is a primary alcohol + NAD(+) = an aldehyde + NADH + H(+). It catalyses the reaction a secondary alcohol + NAD(+) = a ketone + NADH + H(+). This Mycobacterium tuberculosis (strain CDC 1551 / Oshkosh) protein is Probable alcohol dehydrogenase AdhA (adhA).